Here is a 515-residue protein sequence, read N- to C-terminus: 2-isopropylmalate synthase (515 aa).

Positions 5 to 268 (VIIFDTTLRD…VCGIDASQIV (264 aa)) constitute a Pyruvate carboxyltransferase domain. Residues aspartate 14, histidine 202, histidine 204, and asparagine 239 each contribute to the Mn(2+) site. Residues 394–515 (HFISLSQHSE…QAKLNAQMAP (122 aa)) are regulatory domain.

The protein belongs to the alpha-IPM synthase/homocitrate synthase family. LeuA type 1 subfamily. In terms of assembly, homodimer. It depends on Mn(2+) as a cofactor.

Its subcellular location is the cytoplasm. The catalysed reaction is 3-methyl-2-oxobutanoate + acetyl-CoA + H2O = (2S)-2-isopropylmalate + CoA + H(+). The protein operates within amino-acid biosynthesis; L-leucine biosynthesis; L-leucine from 3-methyl-2-oxobutanoate: step 1/4. In terms of biological role, catalyzes the condensation of the acetyl group of acetyl-CoA with 3-methyl-2-oxobutanoate (2-ketoisovalerate) to form 3-carboxy-3-hydroxy-4-methylpentanoate (2-isopropylmalate). The chain is 2-isopropylmalate synthase from Polynucleobacter asymbioticus (strain DSM 18221 / CIP 109841 / QLW-P1DMWA-1) (Polynucleobacter necessarius subsp. asymbioticus).